We begin with the raw amino-acid sequence, 340 residues long: DNA-directed RNA polymerase subunit alpha (340 aa).

The segment at 1-233 (MYRNWRDLIS…EQLSIFINFD (233 aa)) is alpha N-terminal domain (alpha-NTD). The segment at 251 to 340 (VNENLYRSVD…RIRGERKDEE (90 aa)) is alpha C-terminal domain (alpha-CTD).

It belongs to the RNA polymerase alpha chain family. In terms of assembly, homodimer. The RNAP catalytic core consists of 2 alpha, 1 beta, 1 beta' and 1 omega subunit. When a sigma factor is associated with the core the holoenzyme is formed, which can initiate transcription.

It carries out the reaction RNA(n) + a ribonucleoside 5'-triphosphate = RNA(n+1) + diphosphate. In terms of biological role, DNA-dependent RNA polymerase catalyzes the transcription of DNA into RNA using the four ribonucleoside triphosphates as substrates. This is DNA-directed RNA polymerase subunit alpha from Geobacter metallireducens (strain ATCC 53774 / DSM 7210 / GS-15).